A 215-amino-acid chain; its full sequence is Transmembrane protein 267 (215 aa).

The next 3 membrane-spanning stretches (helical) occupy residues 77 to 97, 114 to 134, and 178 to 198; these read FCEV…HFFL, PLHC…LMQL, and YWLY…IMCL.

Its subcellular location is the membrane. The protein is Transmembrane protein 267 (tmem267) of Xenopus laevis (African clawed frog).